The following is a 544-amino-acid chain: Chaperonin GroEL (544 aa).

Residues 30-33, Lys-51, 87-91, Gly-415, 481-483, and Asp-497 contribute to the ATP site; these read TLGP, DGTTT, and DAL.

Belongs to the chaperonin (HSP60) family. As to quaternary structure, forms a cylinder of 14 subunits composed of two heptameric rings stacked back-to-back. Interacts with the co-chaperonin GroES.

The protein resides in the cytoplasm. It carries out the reaction ATP + H2O + a folded polypeptide = ADP + phosphate + an unfolded polypeptide.. Together with its co-chaperonin GroES, plays an essential role in assisting protein folding. The GroEL-GroES system forms a nano-cage that allows encapsulation of the non-native substrate proteins and provides a physical environment optimized to promote and accelerate protein folding. This is Chaperonin GroEL from Chlamydia trachomatis serovar L2 (strain ATCC VR-902B / DSM 19102 / 434/Bu).